A 375-amino-acid polypeptide reads, in one-letter code: 23S rRNA (uracil(747)-C(5))-methyltransferase RlmC (375 aa).

[4Fe-4S] cluster-binding residues include Cys3, Cys11, Cys14, and Cys87. 4 residues coordinate S-adenosyl-L-methionine: Gln212, Phe241, Glu262, and Asn307. The Nucleophile role is filled by Cys334.

It belongs to the class I-like SAM-binding methyltransferase superfamily. RNA M5U methyltransferase family. RlmC subfamily.

The catalysed reaction is uridine(747) in 23S rRNA + S-adenosyl-L-methionine = 5-methyluridine(747) in 23S rRNA + S-adenosyl-L-homocysteine + H(+). Its function is as follows. Catalyzes the formation of 5-methyl-uridine at position 747 (m5U747) in 23S rRNA. In Shigella boydii serotype 4 (strain Sb227), this protein is 23S rRNA (uracil(747)-C(5))-methyltransferase RlmC.